Consider the following 161-residue polypeptide: Probable ubiquitin-conjugating enzyme E2 17 (161 aa).

Positions isoleucine 15–valine 161 constitute a UBC core domain. Residue cysteine 99 is the Glycyl thioester intermediate of the active site.

Belongs to the ubiquitin-conjugating enzyme family.

The catalysed reaction is S-ubiquitinyl-[E1 ubiquitin-activating enzyme]-L-cysteine + [E2 ubiquitin-conjugating enzyme]-L-cysteine = [E1 ubiquitin-activating enzyme]-L-cysteine + S-ubiquitinyl-[E2 ubiquitin-conjugating enzyme]-L-cysteine.. It functions in the pathway protein modification; protein ubiquitination. Its function is as follows. Accepts the ubiquitin from the E1 complex and catalyzes its covalent attachment to other proteins. In Arabidopsis thaliana (Mouse-ear cress), this protein is Probable ubiquitin-conjugating enzyme E2 17 (UBC17).